The primary structure comprises 329 residues: Anthranilate phosphoribosyltransferase (329 aa).

5-phospho-alpha-D-ribose 1-diphosphate contacts are provided by residues G78, 81-82 (GD), 88-91 (NLST), 106-114 (KHGNRAASS), and S118. An anthranilate-binding site is contributed by G78. S90 contacts Mg(2+). N109 serves as a coordination point for anthranilate. R164 contributes to the anthranilate binding site. The Mg(2+) site is built by D221 and E222.

Belongs to the anthranilate phosphoribosyltransferase family. As to quaternary structure, homodimer. It depends on Mg(2+) as a cofactor.

It catalyses the reaction N-(5-phospho-beta-D-ribosyl)anthranilate + diphosphate = 5-phospho-alpha-D-ribose 1-diphosphate + anthranilate. Its pathway is amino-acid biosynthesis; L-tryptophan biosynthesis; L-tryptophan from chorismate: step 2/5. In terms of biological role, catalyzes the transfer of the phosphoribosyl group of 5-phosphorylribose-1-pyrophosphate (PRPP) to anthranilate to yield N-(5'-phosphoribosyl)-anthranilate (PRA). The chain is Anthranilate phosphoribosyltransferase from Thermus thermophilus (strain ATCC BAA-163 / DSM 7039 / HB27).